Reading from the N-terminus, the 330-residue chain is MSATPIIHLRDVKKRTGVLNAWERVRNKPQVHWAMECFAEALGVFFYVYFGLGSTAAWVIGNILKQSGLSSVFQIGFAYAFGILFAIGVCAATSGGHFNPCVTIAFTIFRGFPPLKAVRYIVAQILGAYIASALVYNQWKVLIVESELLLKQAGVYETTMFTPNGPAGIFALYLLPGAQTLPRAFLNEFVNCFVLALVIWAALDPTSFMIPPVMAPFIIAAAYAGSIWGYAVPAISLNSARDIGCRLFALTIWGKSAAGGSYSAIAALVNIPATLLAAVVYELFLVDSDRVVAGSHLEFMNVAANHRRHRQQAEDDNLVEADDSSQEKPV.

The Cytoplasmic segment spans residues 1–40 (MSATPIIHLRDVKKRTGVLNAWERVRNKPQVHWAMECFAE). Residues 41–61 (ALGVFFYVYFGLGSTAAWVIG) traverse the membrane as a helical segment. The Extracellular segment spans residues 62–71 (NILKQSGLSS). Residues 72–92 (VFQIGFAYAFGILFAIGVCAA) form a helical membrane-spanning segment. Residues 93–124 (TSGGHFNPCVTIAFTIFRGFPPLKAVRYIVAQ) lie on the Cytoplasmic side of the membrane. Residues 99–101 (NPC) carry the NPA 1 motif. A helical transmembrane segment spans residues 125–145 (ILGAYIASALVYNQWKVLIVE). Topologically, residues 146 to 157 (SELLLKQAGVYE) are extracellular. A helical membrane pass occupies residues 158–178 (TTMFTPNGPAGIFALYLLPGA). Topologically, residues 179-183 (QTLPR) are cytoplasmic. The helical transmembrane segment at 184–204 (AFLNEFVNCFVLALVIWAALD) threads the bilayer. The Extracellular portion of the chain corresponds to 205–207 (PTS). A helical transmembrane segment spans residues 208-228 (FMIPPVMAPFIIAAAYAGSIW). Residues 229-264 (GYAVPAISLNSARDIGCRLFALTIWGKSAAGGSYSA) lie on the Cytoplasmic side of the membrane. Residues 238–240 (NSA) carry the NPA 2 motif. A helical transmembrane segment spans residues 265 to 285 (IAALVNIPATLLAAVVYELFL). The Extracellular portion of the chain corresponds to 286 to 330 (VDSDRVVAGSHLEFMNVAANHRRHRQQAEDDNLVEADDSSQEKPV). A disordered region spans residues 308 to 330 (RHRQQAEDDNLVEADDSSQEKPV). Acidic residues predominate over residues 314–324 (EDDNLVEADDS).

This sequence belongs to the MIP/aquaporin (TC 1.A.8) family.

It is found in the cell membrane. It catalyses the reaction H2O(in) = H2O(out). It carries out the reaction CO2(out) = CO2(in). Its function is as follows. Water channel required to facilitate the transport of water across membranes. Also mediates the transport of carbon dioxide across the membrane. The chain is Aquaporin-3 from Laccaria bicolor (Bicoloured deceiver).